Reading from the N-terminus, the 640-residue chain is GATA zinc finger domain-containing protein 12 (640 aa).

Disordered regions lie at residues Ser121–Ile209 and Gln355–Asn390. Composition is skewed to low complexity over residues Asn122–Ile209 and Gln355–Gln379. A compositionally biased stretch (polar residues) spans Pro380–Asn390. The GATA-type zinc-finger motif lies at Cys506–Cys531.

The polypeptide is GATA zinc finger domain-containing protein 12 (gtaL) (Dictyostelium discoideum (Social amoeba)).